A 335-amino-acid polypeptide reads, in one-letter code: Anthranilate phosphoribosyltransferase (335 aa).

Residues Gly79, 82–83 (GD), Thr87, 89–92 (NIST), 107–115 (KHGSRSVSS), and Ser119 contribute to the 5-phospho-alpha-D-ribose 1-diphosphate site. Anthranilate is bound at residue Gly79. Residue Ser91 coordinates Mg(2+). Arg165 serves as a coordination point for anthranilate. Asp223 and Glu224 together coordinate Mg(2+).

Belongs to the anthranilate phosphoribosyltransferase family. Homodimer. Mg(2+) serves as cofactor.

The catalysed reaction is N-(5-phospho-beta-D-ribosyl)anthranilate + diphosphate = 5-phospho-alpha-D-ribose 1-diphosphate + anthranilate. It functions in the pathway amino-acid biosynthesis; L-tryptophan biosynthesis; L-tryptophan from chorismate: step 2/5. Catalyzes the transfer of the phosphoribosyl group of 5-phosphorylribose-1-pyrophosphate (PRPP) to anthranilate to yield N-(5'-phosphoribosyl)-anthranilate (PRA). The polypeptide is Anthranilate phosphoribosyltransferase (Helicobacter pylori (strain G27)).